The sequence spans 338 residues: Large ribosomal subunit protein uL3 (338 aa).

Disordered regions lie at residues 230 to 256 (HRKG…RPGQ) and 315 to 338 (PARP…SQQP).

It belongs to the universal ribosomal protein uL3 family. In terms of assembly, part of the 50S ribosomal subunit. Forms a cluster with proteins L14 and L24e.

Its function is as follows. One of the primary rRNA binding proteins, it binds directly near the 3'-end of the 23S rRNA, where it nucleates assembly of the 50S subunit. The sequence is that of Large ribosomal subunit protein uL3 from Pyrobaculum arsenaticum (strain DSM 13514 / JCM 11321 / PZ6).